Reading from the N-terminus, the 207-residue chain is Thiamine-phosphate synthase (207 aa).

4-amino-2-methyl-5-(diphosphooxymethyl)pyrimidine is bound by residues 41-45 (QLRLK) and N73. The Mg(2+) site is built by D74 and D93. T111 is a 4-amino-2-methyl-5-(diphosphooxymethyl)pyrimidine binding site. Residue 138–140 (TKT) participates in 2-[(2R,5Z)-2-carboxy-4-methylthiazol-5(2H)-ylidene]ethyl phosphate binding. K141 lines the 4-amino-2-methyl-5-(diphosphooxymethyl)pyrimidine pocket. Residue G168 participates in 2-[(2R,5Z)-2-carboxy-4-methylthiazol-5(2H)-ylidene]ethyl phosphate binding.

Belongs to the thiamine-phosphate synthase family. It depends on Mg(2+) as a cofactor.

It carries out the reaction 2-[(2R,5Z)-2-carboxy-4-methylthiazol-5(2H)-ylidene]ethyl phosphate + 4-amino-2-methyl-5-(diphosphooxymethyl)pyrimidine + 2 H(+) = thiamine phosphate + CO2 + diphosphate. The catalysed reaction is 2-(2-carboxy-4-methylthiazol-5-yl)ethyl phosphate + 4-amino-2-methyl-5-(diphosphooxymethyl)pyrimidine + 2 H(+) = thiamine phosphate + CO2 + diphosphate. It catalyses the reaction 4-methyl-5-(2-phosphooxyethyl)-thiazole + 4-amino-2-methyl-5-(diphosphooxymethyl)pyrimidine + H(+) = thiamine phosphate + diphosphate. It participates in cofactor biosynthesis; thiamine diphosphate biosynthesis; thiamine phosphate from 4-amino-2-methyl-5-diphosphomethylpyrimidine and 4-methyl-5-(2-phosphoethyl)-thiazole: step 1/1. Its function is as follows. Condenses 4-methyl-5-(beta-hydroxyethyl)thiazole monophosphate (THZ-P) and 2-methyl-4-amino-5-hydroxymethyl pyrimidine pyrophosphate (HMP-PP) to form thiamine monophosphate (TMP). The chain is Thiamine-phosphate synthase from Pelagibacter ubique (strain HTCC1062).